We begin with the raw amino-acid sequence, 1625 residues long: Nonribosomal peptide synthetase aclP (1625 aa).

Residues 47–123 form the Carrier 1 domain; it reads TTMNPSSQLL…ALFTDLLSSE (77 aa). Ser84 is modified (O-(pantetheine 4'-phosphoryl)serine). The tract at residues 127–157 is disordered; the sequence is IPIPDPSDDSDDLSNPSSSTGGSPRVATPIS. Residues 286 to 567 are condensation 1; sequence ASSQSTVIWA…KYFQRALQLL (282 aa). The tract at residues 614-997 is adenylation; the sequence is FESAVSRNPM…GRTDRQIKLR (384 aa). One can recognise a Carrier 2 domain in the interval 1096-1171; that stretch reads SPMEKLVGDA…HLAAAIDSGL (76 aa). An O-(pantetheine 4'-phosphoryl)serine modification is found at Ser1131. The tract at residues 1195–1585 is condensation 2; it reads EWWHKYQINE…LQARIPLALS (391 aa).

Belongs to the NRP synthetase family.

It participates in mycotoxin biosynthesis. Functionally, nonribosomal peptide synthetase; part of the gene cluster that mediates the biosynthesis of aspirochlorine (or antibiotic A30641), an unusual halogenated spiro compound with distinctive antifungal properties due to selective inhibition of protein biosynthesis, and which is also active against bacteria, viruses, and murine tumor cells. The non-ribosomal peptide synthetase (NRPS) aclP is responsible the formation of the diketopiperazine (DKP) core from the condensation of 2 phenylalanine residues. One Phe residue is tailored into chlorotyrosine by hydroxylation and chlorination, whereas the second Phe undergoes an unprecedented C-C bond cleavage to be converted into glycine. After formation of the DKP, sulfur is incorporated into the DKP by conjugation with glutathione by aclG, followed by its stepwise degradation to the thiol by aclI, aclJ and aclK, and the dithiol oxidation by aclT. In addition, oxygenases (aclB, aclC, aclL and aclO) and O-methyltransferases (aclM and aclU) act as tailoring enzymes to produce the intermediate dechloroaspirochlorine. Ultimately, chlorination of dechloroaspirochlorine by the halogenase aclH is the last step in the aspirochlorine pathway. The protein is Nonribosomal peptide synthetase aclP of Aspergillus oryzae (strain ATCC 42149 / RIB 40) (Yellow koji mold).